A 227-amino-acid chain; its full sequence is Urease accessory protein UreF (227 aa).

Belongs to the UreF family. UreD, UreF and UreG form a complex that acts as a GTP-hydrolysis-dependent molecular chaperone, activating the urease apoprotein by helping to assemble the nickel containing metallocenter of UreC. The UreE protein probably delivers the nickel.

Its subcellular location is the cytoplasm. Required for maturation of urease via the functional incorporation of the urease nickel metallocenter. The sequence is that of Urease accessory protein UreF from Actinobacillus pleuropneumoniae (Haemophilus pleuropneumoniae).